The sequence spans 140 residues: Putative nickel-responsive regulator 2 (140 aa).

4 residues coordinate Ni(2+): His81, His92, His94, and Cys100.

The protein belongs to the transcriptional regulatory CopG/NikR family. Ni(2+) is required as a cofactor.

Functionally, transcriptional regulator. The protein is Putative nickel-responsive regulator 2 of Methanosarcina mazei (strain ATCC BAA-159 / DSM 3647 / Goe1 / Go1 / JCM 11833 / OCM 88) (Methanosarcina frisia).